The chain runs to 661 residues: Peroxisomal acyl-coenzyme A oxidase 1 (661 aa).

S26 carries the post-translational modification Phosphoserine. K65 is modified (N6-acetyllysine). K89 and K90 each carry N6-succinyllysine. T139 contributes to the FAD binding site. N6-succinyllysine is present on K159. G178 lines the FAD pocket. K216 carries the N6-acetyllysine modification. K241 is subject to N6-succinyllysine. An N6-acetyllysine mark is found at K255, K267, and K272. K349 is subject to N6-succinyllysine. E421 (proton acceptor) is an active-site residue. K437 and K446 each carry N6-acetyllysine; alternate. 2 positions are modified to N6-succinyllysine; alternate: K437 and K446. K500 carries the post-translational modification N6-acetyllysine. At K512 the chain carries N6-acetyllysine; alternate. K512 is modified (N6-succinyllysine; alternate). K542 carries the post-translational modification N6-succinyllysine. K637 is modified (N6-acetyllysine; alternate). The residue at position 637 (K637) is an N6-succinyllysine; alternate. K643 carries the N6-succinyllysine modification. S649 carries the phosphoserine modification. An N6-acetyllysine modification is found at K652. The residue at position 655 (K655) is an N6-succinyllysine. A Microbody targeting signal motif is present at residues 659–661 (SKL).

It belongs to the acyl-CoA oxidase family. As to quaternary structure, homodimer. Interacts with LONP2. Requires FAD as cofactor. As to expression, highest levels of isoform 1 are found in liver and kidney while highest levels of isoform 2 are found in white adipose tissue. Isoform 1 is expressed at higher levels than isoform 2 in liver and kidney while isoform 2 is expressed at higher levels in brain, heart, lung, muscle, white adipose tissue and testis.

It localises to the peroxisome. The enzyme catalyses a 2,3-saturated acyl-CoA + O2 = a (2E)-enoyl-CoA + H2O2. It carries out the reaction hexadecanoyl-CoA + O2 = (2E)-hexadecenoyl-CoA + H2O2. The catalysed reaction is dodecanoyl-CoA + O2 = (2E)-dodecenoyl-CoA + H2O2. It catalyses the reaction octanoyl-CoA + O2 = (2E)-octenoyl-CoA + H2O2. The enzyme catalyses decanoyl-CoA + O2 = (2E)-decenoyl-CoA + H2O2. It carries out the reaction tetradecanoyl-CoA + O2 = (2E)-tetradecenoyl-CoA + H2O2. The catalysed reaction is hexadecanedioyl-CoA + O2 = (2E)-hexadecenedioyl-CoA + H2O2. It catalyses the reaction tetracosanoyl-CoA + O2 = (2E)-tetracosenoyl-CoA + H2O2. The enzyme catalyses glutaryl-CoA + O2 = (2E)-glutaconyl-CoA + H2O2. It carries out the reaction hexanoyl-CoA + O2 = (2E)-hexenoyl-CoA + H2O2. The catalysed reaction is octadecanoyl-CoA + O2 = (2E)-octadecenoyl-CoA + H2O2. It catalyses the reaction (5Z,8Z,11Z,14Z,17Z)-eicosapentaenoyl-CoA + O2 = (2E,5Z,8Z,11Z,14Z,17Z)-icosahexaenoyl-CoA + H2O2. The enzyme catalyses (6Z,9Z,12Z,15Z,18Z,21Z)-tetracosahexaenoyl-CoA + O2 = (2E,6Z,9Z,12Z,15Z,18Z,21Z)-tetracosaheptaenoyl-CoA + H2O2. It functions in the pathway lipid metabolism; peroxisomal fatty acid beta-oxidation. Involved in the initial and rate-limiting step of peroxisomal beta-oxidation of straight-chain saturated and unsaturated very-long-chain fatty acids. Catalyzes the desaturation of fatty acyl-CoAs such as palmitoyl-CoA (hexadecanoyl-CoA) to 2-trans-enoyl-CoAs ((2E)-enoyl-CoAs) such as (2E)-hexadecenoyl-CoA, and donates electrons directly to molecular oxygen (O(2)), thereby producing hydrogen peroxide (H(2)O(2)). In terms of biological role, shows highest activity against medium-chain fatty acyl-CoAs. Shows optimum activity with a chain length of 10 carbons (decanoyl-CoA) in vitro. Functionally, is active against a much broader range of substrates and shows activity towards long-chain acyl-CoAs. The chain is Peroxisomal acyl-coenzyme A oxidase 1 from Mus musculus (Mouse).